The primary structure comprises 373 residues: Glutamate 5-kinase (373 aa).

An ATP-binding site is contributed by K15. Residues S55, D142, and N154 each coordinate substrate. Residues 174-175 (TD) and 216-222 (TGGMVTK) each bind ATP. The 79-residue stretch at 281–359 (SGKIIVDDGA…GEIEAILGYK (79 aa)) folds into the PUA domain.

Belongs to the glutamate 5-kinase family.

It is found in the cytoplasm. It catalyses the reaction L-glutamate + ATP = L-glutamyl 5-phosphate + ADP. The protein operates within amino-acid biosynthesis; L-proline biosynthesis; L-glutamate 5-semialdehyde from L-glutamate: step 1/2. In terms of biological role, catalyzes the transfer of a phosphate group to glutamate to form L-glutamate 5-phosphate. The sequence is that of Glutamate 5-kinase from Geobacter sulfurreducens (strain ATCC 51573 / DSM 12127 / PCA).